Here is a 556-residue protein sequence, read N- to C-terminus: MKSDNVRIGLERAPHRSLFKAMGYTDEELNRPLIGVANPMNAVIPGHVHLNNIAEAVQKGIYLAGGTPAIFGGIGVCDGIAMNHAGMKYSLASREIIADSVEIMATAHAFDGLVLICNCDKIVPGMLMAAARIDIPTVIISGGPMLAGSHPNVKNGEKIDLITVFEGVGAVKSGKMTEEELSLMEDEACPTCGSCAGMFTANSMNCLTEVIGMGLPGNGTIPAVMASRIRLAKQAGMAVMDMVEKNITPSQIMTPEAFANALAVDMALGCSTNTALHLPAIAHEAGVEFNLKQINEISARIPHLCQLSPGGYHRIEDLNRAGGIQAVLSELIKHNLINTDCITVTGKSVGENASKARILDPEVIRSVETPYHKEGGLAVLFGNVAPEGCVVKQSAVVDKMLVHEGPARVFDSEDEASKAIMDGLIKKGDVVVVRYEGPKGGPGMREMLTPTSVIAGMGLDADVALITDGRFSGGTRGAAIGHVSPEAMSGGPIAAVREGDIIKINIPEKTIALDVPEEEIKARMAGWTPPEPKITKGYMARYARNVESASKGAVVL.

Asp-78 provides a ligand contact to Mg(2+). Cys-119 serves as a coordination point for [2Fe-2S] cluster. Residues Asp-120 and Lys-121 each coordinate Mg(2+). Lys-121 bears the N6-carboxylysine mark. Cys-195 contributes to the [2Fe-2S] cluster binding site. Mg(2+) is bound at residue Glu-446. Ser-472 acts as the Proton acceptor in catalysis.

The protein belongs to the IlvD/Edd family. In terms of assembly, homodimer. Requires [2Fe-2S] cluster as cofactor. Mg(2+) serves as cofactor.

It catalyses the reaction (2R)-2,3-dihydroxy-3-methylbutanoate = 3-methyl-2-oxobutanoate + H2O. The enzyme catalyses (2R,3R)-2,3-dihydroxy-3-methylpentanoate = (S)-3-methyl-2-oxopentanoate + H2O. It functions in the pathway amino-acid biosynthesis; L-isoleucine biosynthesis; L-isoleucine from 2-oxobutanoate: step 3/4. Its pathway is amino-acid biosynthesis; L-valine biosynthesis; L-valine from pyruvate: step 3/4. Functions in the biosynthesis of branched-chain amino acids. Catalyzes the dehydration of (2R,3R)-2,3-dihydroxy-3-methylpentanoate (2,3-dihydroxy-3-methylvalerate) into 2-oxo-3-methylpentanoate (2-oxo-3-methylvalerate) and of (2R)-2,3-dihydroxy-3-methylbutanoate (2,3-dihydroxyisovalerate) into 2-oxo-3-methylbutanoate (2-oxoisovalerate), the penultimate precursor to L-isoleucine and L-valine, respectively. This is Dihydroxy-acid dehydratase from Desulfatibacillum aliphaticivorans.